The sequence spans 465 residues: Alpha-2A adrenergic receptor (465 aa).

Over Met-1–Thr-48 the chain is Extracellular. N-linked (GlcNAc...) asparagine glycosylation is found at Asn-25 and Asn-29. A helical membrane pass occupies residues Leu-49–Phe-74. Topologically, residues Thr-75–Leu-85 are cytoplasmic. The helical transmembrane segment at Phe-86–Met-111 threads the bilayer. At Gly-112 to Cys-121 the chain is on the extracellular side. A disulfide bridge connects residues Cys-121 and Cys-203. A helical membrane pass occupies residues Glu-122 to Leu-144. The Cytoplasmic segment spans residues Asp-145 to Arg-164. Residues Ile-165–Glu-188 form a helical membrane-spanning segment. The Extracellular portion of the chain corresponds to Lys-189–Asp-207. The helical transmembrane segment at Gln-208–Val-232 threads the bilayer. Over Arg-233 to Phe-389 the chain is Cytoplasmic. Residues Thr-242–Arg-378 are disordered. Over residues Ser-313–Pro-330 the composition is skewed to basic and acidic residues. Ser-346 bears the Phosphoserine mark. Gly residues predominate over residues Gly-353–Gly-363. Position 368 is an omega-N-methylarginine (Arg-368). Residues Val-390–Val-414 traverse the membrane as a helical segment. Over Gly-415–Asn-424 the chain is Extracellular. A helical transmembrane segment spans residues Phe-425 to Asn-445. Residues His-446–Val-465 are Cytoplasmic-facing. Cys-457 is lipidated: S-palmitoyl cysteine.

Belongs to the G-protein coupled receptor 1 family. Adrenergic receptor subfamily. ADRA2A sub-subfamily.

It is found in the cell membrane. Functionally, alpha-2 adrenergic receptors mediate the catecholamine-induced inhibition of adenylate cyclase through the action of G proteins. The polypeptide is Alpha-2A adrenergic receptor (Mus musculus (Mouse)).